We begin with the raw amino-acid sequence, 947 residues long: Pyruvate, phosphate dikinase 1, chloroplastic (947 aa).

The N-terminal 71 residues, 1–71, are a transit peptide targeting the chloroplast; sequence MPSVSRAVCV…PLRAVAAPIP (71 aa). The interval 39 to 60 is disordered; it reads RHGKPEVAIRSGSGGSARGGHC. The residue at position 527 (T527) is a Phosphothreonine; by PDRP1. The Tele-phosphohistidine intermediate role is filled by H529. Substrate-binding residues include R635, R692, E821, G842, T843, N844, and D845. E821 contributes to the Mg(2+) binding site. D845 contributes to the Mg(2+) binding site. The active-site Proton donor is C907.

It belongs to the PEP-utilizing enzyme family. In terms of assembly, homotetramer. The cofactor is Mg(2+). In terms of processing, phosphorylation of Thr-527 in the dark inactivates the enzyme. Dephosphorylation upon light stimulation reactivates the enzyme. Phosphorylation increases during the first 20 days post-pollination and then remains constant through the 40-day mature seed stage. Reactivation by dephosphorylation during germination is negligible. In terms of tissue distribution, isoform 1 is only expressed in green leaves. Isoform 2 is found in roots, stems, rachis branches, leaf sheaths, green leaves and spikelets. The non-phosphorylated PPDK in mature seeds is endosperm-localized.

It is found in the plastid. The protein localises to the chloroplast. It localises to the cytoplasm. It catalyses the reaction pyruvate + phosphate + ATP = phosphoenolpyruvate + AMP + diphosphate + H(+). Activated by light-induced dephosphorylation. Inhibited by dark-induced phosphorylation. Both reactions are catalyzed by PDRP1. In terms of biological role, formation of phosphoenolpyruvate. The cytoplasmic isoform supports the biosynthetic processes in the nascent endosperm and provides an efficient mechanism for glycolytic ATP synthesis in oxygen depleted tissues. May be involved in regulating the flux of carbon into starch and fatty acids of seeds and in the remobilization of nitrogen reserves in senescing leaves. This Oryza sativa subsp. japonica (Rice) protein is Pyruvate, phosphate dikinase 1, chloroplastic (PPDK1).